The following is a 670-amino-acid chain: G-protein coupled receptor moody (670 aa).

At 1 to 40 (MSDETTISLEDGYPPLEALTTMVPPADATGFSQSLLTFAA) the chain is on the extracellular side. The helical transmembrane segment at 41–61 (VMTFLIMIVGICGNLLTVVAL) threads the bilayer. Residues 62–69 (LKCPKVRN) are Cytoplasmic-facing. Residues 70-90 (VAAAFIISLCIADLLFCALVL) form a helical membrane-spanning segment. At 91 to 111 (PFQGLRFVQGTWRHGQVLCRL) the chain is on the extracellular side. Cysteines 109 and 188 form a disulfide. The helical transmembrane segment at 112-132 (IPFIQYGNIGVSLLCIAMITI) threads the bilayer. The Cytoplasmic segment spans residues 133–152 (NRYVMITHHGLYARIYKRHW). Residues 153–173 (IAVMIAACWLFSYGMQLPTLL) form a helical membrane-spanning segment. The Extracellular portion of the chain corresponds to 174–202 (GEWGRFGYDSRLQTCSIMTDDHGHSSKTT). Residues 203-223 (LFITAFVIPCLVIIACYAKIF) traverse the membrane as a helical segment. At 224–313 (WVVHKSEQRL…AKRNEWRITK (90 aa)) the chain is on the cytoplasmic side. The segment at 258-302 (LPSGAECQPSNRVSSDSSSSFSIDVPETAPSGKQQPTRVKDQREV) is disordered. The segment covering 267-279 (SNRVSSDSSSSFS) has biased composition (low complexity). A helical membrane pass occupies residues 314 to 334 (MVLAIFLSFVVCYLPITIVKV). Topologically, residues 335-345 (ADKNVEHPSLH) are extracellular. Residues 346-366 (ICSYILLYLSACINPIIYVIM) form a helical membrane-spanning segment. The Cytoplasmic portion of the chain corresponds to 367–670 (NKQYRKAYKT…LTAKMKFPKD (304 aa)). 3 disordered regions span residues 461-490 (DLIS…GSNS), 562-622 (ELPP…YMNV), and 636-670 (TNAV…FPKD). Positions 564–584 (PPTPPATSAPTTPAPPPPSSP) are enriched in pro residues. Residues 585 to 598 (LHPLSTDSSTTTIS) show a composition bias toward low complexity. Polar residues predominate over residues 646–660 (GPANTSATVSISGSK).

The protein belongs to the G-protein coupled receptor 1 family. In terms of tissue distribution, isoform A and isoform B are expressed in the head. Isoform B only is expressed in the body. Expressed in embryonic glial cells that are involved in ensheathment and insulation of the nervous system. Both isoforms are expressed in glia that insulate the larval and adult nervous system. Also expressed in the germ cells, the gut, and the heart.

The protein resides in the cell membrane. Functionally, isoform A and isoform B are required in glia to regulate the acute sensitivity to cocaine and to continuously maintain the proper blood-brain barrier (BBB) function. A moody-mediated signaling pathway functions in glia to regulate nervous system insulation and drug-related behaviors. Galphai and Galphao, and the regulator of G protein signaling, loco, are required in the surface glia to achieve effective insulation. The components function by regulating the cortical actin and thereby stabilizing the extended morphology of the surface glia, which in turn is necessary for the formation of septate junctions of sufficient length to achieve proper sealing of the nerve cord. In Drosophila melanogaster (Fruit fly), this protein is G-protein coupled receptor moody.